Reading from the N-terminus, the 224-residue chain is Transposase for insertion sequence-like element IS431mec (224 aa).

A DNA-binding region (H-T-H motif) is located at residues 33–52 (EILRERGVNVHHSTVYRWVQ). An Integrase catalytic domain is found at 73–222 (WRIDETYIKI…SPCHEISIML (150 aa)).

Involved in the transposition of the insertion sequence. This chain is Transposase for insertion sequence-like element IS431mec (tnp), found in Staphylococcus aureus (strain NCTC 8325 / PS 47).